Reading from the N-terminus, the 256-residue chain is Thiazole synthase (256 aa).

Lysine 98 acts as the Schiff-base intermediate with DXP in catalysis. 1-deoxy-D-xylulose 5-phosphate-binding positions include glycine 159, 185-186, and 207-208; these read AG and NT.

The protein belongs to the ThiG family. In terms of assembly, homotetramer. Forms heterodimers with either ThiH or ThiS.

It localises to the cytoplasm. It catalyses the reaction [ThiS sulfur-carrier protein]-C-terminal-Gly-aminoethanethioate + 2-iminoacetate + 1-deoxy-D-xylulose 5-phosphate = [ThiS sulfur-carrier protein]-C-terminal Gly-Gly + 2-[(2R,5Z)-2-carboxy-4-methylthiazol-5(2H)-ylidene]ethyl phosphate + 2 H2O + H(+). It functions in the pathway cofactor biosynthesis; thiamine diphosphate biosynthesis. Functionally, catalyzes the rearrangement of 1-deoxy-D-xylulose 5-phosphate (DXP) to produce the thiazole phosphate moiety of thiamine. Sulfur is provided by the thiocarboxylate moiety of the carrier protein ThiS. In vitro, sulfur can be provided by H(2)S. This chain is Thiazole synthase, found in Aliivibrio fischeri (strain MJ11) (Vibrio fischeri).